A 626-amino-acid polypeptide reads, in one-letter code: Two-component response regulator ORR24 (626 aa).

Residues 1 to 22 (MTVEERQGRVGGHGVSGGGGGR) form a disordered region. A compositionally biased stretch (gly residues) spans 9-22 (RVGGHGVSGGGGGR). One can recognise a Response regulatory domain in the interval 30–145 (RVLAVDDDPT…QLRTIWQHVI (116 aa)). Asp-81 carries the 4-aspartylphosphate modification. Residues 151–162 (DAKNRGNDDDAG) show a composition bias toward basic and acidic residues. 2 disordered regions span residues 151–215 (DAKN…KKPR) and 400–440 (LQPL…RTTN). The segment covering 191–202 (NGDDGDDSDENS) has biased composition (acidic residues). The myb-like GARP DNA-binding region spans 210–269 (TQKKPRVVWSVELHRKFVAAVNQLGIEKAVPKKILDLMNVENITRENVASHLQKYRLYLK). Residues 400–421 (LQPLESSSQQHLSRVHSSSADP) show a composition bias toward polar residues.

Belongs to the ARR family. Type-B subfamily. Post-translationally, two-component system major event consists of a His-to-Asp phosphorelay between a sensor histidine kinase (HK) and a response regulator (RR). In plants, the His-to-Asp phosphorelay involves an additional intermediate named Histidine-containing phosphotransfer protein (HPt). This multistep phosphorelay consists of a His-Asp-His-Asp sequential transfer of a phosphate group between first a His and an Asp of the HK protein, followed by the transfer to a conserved His of the HPt protein and finally the transfer to an Asp in the receiver domain of the RR protein.

It is found in the nucleus. Functionally, transcriptional activator that binds specific DNA sequence. Functions as a response regulator involved in His-to-Asp phosphorelay signal transduction system. Phosphorylation of the Asp residue in the receiver domain activates the ability of the protein to promote the transcription of target genes. May directly activate some type-A response regulators in response to cytokinins. The protein is Two-component response regulator ORR24 of Oryza sativa subsp. indica (Rice).